The primary structure comprises 561 residues: Reductase FVEG_12641 (561 aa).

Residues Met1–Gly26 are disordered. The MOSC domain occupies Gln52–Leu189. The FAD-binding FR-type domain occupies Ser237 to Asn342. FMN is bound by residues Phe288 to Glu289, Gly305 to Ser307, Arg313 to Ser316, and Thr362. A 2Fe-2S ferredoxin-type domain is found at Phe474–Asp561. Cys512 provides a ligand contact to [2Fe-2S] cluster. Residue Ser514 participates in FMN binding. Positions 517, 520, and 548 each coordinate [2Fe-2S] cluster.

Belongs to the PDR/VanB family. As to quaternary structure, monomer. FMN is required as a cofactor.

Its function is as follows. Reductase; part of the Fusarium detoxification of benzoxazolinone cluster 2 (FDB2) involved in the degradation of benzoxazolinones produced by the host plant. Maize, wheat, and rye produce the 2 benzoxazinone phytoanticipins 2,4-dihy-droxy-7-methoxy-1,4-benzoxazin-3-one (DIMBOA) and 2,4-dihydroxy-1,4-benzoxazin-3-one (DIBOA) that, due to their inherent instability once released, spontaneously degrade to the more stable corresponding benzoxazolinones, 6-methoxy-2-benzoxazolinone (MBOA) and 2-benzoxazolinone (BOA), respectively. The first step in the detoxification of benzoxazolinones involves the hydrolysis of the cyclic ester bond of benzoxazolinones by the FDB1 cluster gamma-lactamase MBL1 to aminophenols. MBL1 is able to convert BOA into 2-aminophenol (2-AP), as well as MBOA into 5-methoxy-2-aminophenol (2-AMP). The FDB2 cluster N-malonyltransferase FDB2/NAT1 then metabolizes aminophenols via N-malonylation to non-toxic malonamic acids. FDB2/NAT1 converts 2-AP into N-(2-hydroxyphenyl) malonamic acid (HPMA) and 2-AMP into N-(2-hydroxy-4-methoxyphenyl) malonamic acid (HMPMA). The duplicated dienlactone hydrolases DLH1 and DLH2 may provide redundant function for hydrolyzing the lactone moiety in the BOA molecule. The roles of the amidases an other enzymes encoded by the 2 FDB clusters have not been identified so far. The polypeptide is Reductase FVEG_12641 (Gibberella moniliformis (strain M3125 / FGSC 7600) (Maize ear and stalk rot fungus)).